Consider the following 247-residue polypeptide: Adenosylcobinamide-GDP ribazoletransferase (247 aa).

The next 6 helical transmembrane spans lie at 31-51 (VVWFPAAGLVVGAAVALAAAL), 57-77 (PWLGALAGVVMWAWITGGLHL), 109-129 (FGVIVLVLQLAAKLVLLHWLL), 136-156 (PALVLIPAWTRWAAAGWTLLL), 189-209 (ITPIAFVALIPAVLWGVWMWL), and 218-238 (ILGAGIEWSESAALLLAGVSL).

The protein belongs to the CobS family. Requires Mg(2+) as cofactor.

It is found in the cell inner membrane. The enzyme catalyses alpha-ribazole + adenosylcob(III)inamide-GDP = adenosylcob(III)alamin + GMP + H(+). The catalysed reaction is alpha-ribazole 5'-phosphate + adenosylcob(III)inamide-GDP = adenosylcob(III)alamin 5'-phosphate + GMP + H(+). It participates in cofactor biosynthesis; adenosylcobalamin biosynthesis; adenosylcobalamin from cob(II)yrinate a,c-diamide: step 7/7. Joins adenosylcobinamide-GDP and alpha-ribazole to generate adenosylcobalamin (Ado-cobalamin). Also synthesizes adenosylcobalamin 5'-phosphate from adenosylcobinamide-GDP and alpha-ribazole 5'-phosphate. The chain is Adenosylcobinamide-GDP ribazoletransferase from Thiobacillus denitrificans (strain ATCC 25259 / T1).